Here is a 245-residue protein sequence, read N- to C-terminus: DNA repair protein RecO (245 aa).

This sequence belongs to the RecO family.

In terms of biological role, involved in DNA repair and RecF pathway recombination. This chain is DNA repair protein RecO, found in Klebsiella pneumoniae (strain 342).